Reading from the N-terminus, the 124-residue chain is Small ribosomal subunit protein bS6 (124 aa).

Residues 97–124 (EQGPSAMMRRGDRDRSNRSDRRRDRDAA) are disordered. The segment covering 105-124 (RRGDRDRSNRSDRRRDRDAA) has biased composition (basic and acidic residues).

This sequence belongs to the bacterial ribosomal protein bS6 family.

Binds together with bS18 to 16S ribosomal RNA. This Zymomonas mobilis subsp. mobilis (strain ATCC 31821 / ZM4 / CP4) protein is Small ribosomal subunit protein bS6.